The chain runs to 401 residues: NADH-quinone oxidoreductase subunit D (401 aa).

It belongs to the complex I 49 kDa subunit family. In terms of assembly, NDH-1 is composed of 14 different subunits. Subunits NuoB, C, D, E, F, and G constitute the peripheral sector of the complex.

Its subcellular location is the cell inner membrane. The catalysed reaction is a quinone + NADH + 5 H(+)(in) = a quinol + NAD(+) + 4 H(+)(out). Its function is as follows. NDH-1 shuttles electrons from NADH, via FMN and iron-sulfur (Fe-S) centers, to quinones in the respiratory chain. The immediate electron acceptor for the enzyme in this species is believed to be ubiquinone. Couples the redox reaction to proton translocation (for every two electrons transferred, four hydrogen ions are translocated across the cytoplasmic membrane), and thus conserves the redox energy in a proton gradient. This chain is NADH-quinone oxidoreductase subunit D, found in Rhodopseudomonas palustris (strain HaA2).